Here is a 514-residue protein sequence, read N- to C-terminus: Bifunctional NAD(P)H-hydrate repair enzyme Nnr (514 aa).

The segment at 1 to 218 (MKLVTSEEIK…IPIEIVNDIV (218 aa)) is NAD(P)H-hydrate epimerase. One can recognise a YjeF N-terminal domain in the interval 9 to 215 (IKRLEERLER…RLGIPIEIVN (207 aa)). The segment at 59 to 63 (NNGGD) is NADPHX 1; for epimerase activity. Positions 60 and 125 each coordinate K(+). The segment at 129–135 (GIGLKRE) is NADPHX 1; for epimerase activity. Asp158 provides a ligand contact to (6S)-NADPHX. Ser161 contributes to the K(+) binding site. Residues 226–508 (DWELLKDIVR…KILPLAIDEV (283 aa)) enclose the YjeF C-terminal domain. Positions 226–514 (DWELLKDIVR…IDEVIRRRNV (289 aa)) are ADP-dependent (S)-NAD(P)H-hydrate dehydratase. Position 333 (Gly333) interacts with (6S)-NADPHX. The NADPHX 2; for dehydratase activity stretch occupies residues 382-388 (HYGEMSR). ADP is bound by residues 419–423 (KGPNS) and 439–448 (DFLLATAGSG). Asp449 lines the (6S)-NADPHX pocket.

The protein in the N-terminal section; belongs to the NnrE/AIBP family. In the C-terminal section; belongs to the NnrD/CARKD family. It depends on K(+) as a cofactor.

It carries out the reaction (6S)-NADHX + ADP = AMP + phosphate + NADH + H(+). The enzyme catalyses (6S)-NADPHX + ADP = AMP + phosphate + NADPH + H(+). The catalysed reaction is (6R)-NADHX = (6S)-NADHX. It catalyses the reaction (6R)-NADPHX = (6S)-NADPHX. Its function is as follows. Bifunctional enzyme that catalyzes the epimerization of the S- and R-forms of NAD(P)HX and the dehydration of the S-form of NAD(P)HX at the expense of ADP, which is converted to AMP. This allows the repair of both epimers of NAD(P)HX, a damaged form of NAD(P)H that is a result of enzymatic or heat-dependent hydration. In Dictyoglomus turgidum (strain DSM 6724 / Z-1310), this protein is Bifunctional NAD(P)H-hydrate repair enzyme Nnr (nnr).